The primary structure comprises 437 residues: MSMFLDTAKISVKAGRGGDGMVAFRREKYVPNGGPWGGDGGKGGSVIFKVNEGLRTLMDFRYNRNFKAKAGEKGMTKGMHGRGAEDLIVSLPPGTTVRDATTGKVITDLVEHDQEFVVARGGRGGRGNIRFATPRNPAPEIAENGEPGEERELQLELKILADVGLVGFPSVGKSTLLSVVSAAKPKIGAYHFTTIVPNLGMVRTKSGDSFAMADLPGLIEGASQGVGLGTQFLRHIERTRVILHVIDMSASEGRDPYDDYVSINNELETYNLRLMERPQIIVANKMDMPDSEENLAAFKEKLAANYDEFDDMPMIFPISSLAHQGLENLMDATAELLANTEEFLLYDETDMQEDEAYYGFNEDERPFEITRDDDATWVLYGDKLEKLFVMTNMERDESIMKFARQLRGMGVDEALRERGAKDGDIVRIGNFEFEFVD.

Residues 2 to 160 form the Obg domain; that stretch reads SMFLDTAKIS…RELQLELKIL (159 aa). An OBG-type G domain is found at 161-338; that stretch reads ADVGLVGFPS…LMDATAELLA (178 aa). Residues 167–174, 192–196, 214–217, 284–287, and 319–321 contribute to the GTP site; these read GFPSVGKS, FTTIV, DLPG, NKMD, and SSL. Residues serine 174 and threonine 194 each contribute to the Mg(2+) site. Residues 359-437 form the OCT domain; sequence GFNEDERPFE…IGNFEFEFVD (79 aa).

The protein belongs to the TRAFAC class OBG-HflX-like GTPase superfamily. OBG GTPase family. In terms of assembly, monomer. Mg(2+) is required as a cofactor.

The protein localises to the cytoplasm. In terms of biological role, an essential GTPase which binds GTP, GDP and possibly (p)ppGpp with moderate affinity, with high nucleotide exchange rates and a fairly low GTP hydrolysis rate. Plays a role in control of the cell cycle, stress response, ribosome biogenesis and in those bacteria that undergo differentiation, in morphogenesis control. The chain is GTPase Obg from Streptococcus agalactiae serotype Ia (strain ATCC 27591 / A909 / CDC SS700).